Consider the following 473-residue polypeptide: Cysteine--tRNA ligase (473 aa).

Cysteine 27 provides a ligand contact to Zn(2+). The short motif at 29 to 39 (ITPYDHVHVGH) is the 'HIGH' region element. Zn(2+) is bound by residues cysteine 213, histidine 238, and glutamate 242. The 'KMSKS' region signature appears at 271–275 (KMSKS). Lysine 274 contacts ATP.

It belongs to the class-I aminoacyl-tRNA synthetase family. Zn(2+) is required as a cofactor.

Its subcellular location is the cytoplasm. It carries out the reaction tRNA(Cys) + L-cysteine + ATP = L-cysteinyl-tRNA(Cys) + AMP + diphosphate. The chain is Cysteine--tRNA ligase from Pyrobaculum calidifontis (strain DSM 21063 / JCM 11548 / VA1).